Here is a 209-residue protein sequence, read N- to C-terminus: High frequency lysogenization protein HflD homolog (209 aa).

The stretch at 79–121 (QGLNAELTRYTLSLMVLERKLNSAKGAMDTLGDRIAGLQRQLD) forms a coiled coil.

It belongs to the HflD family.

The protein resides in the cytoplasm. It localises to the cell inner membrane. This chain is High frequency lysogenization protein HflD homolog, found in Enterobacter sp. (strain 638).